Consider the following 571-residue polypeptide: DM7 family protein CG15332 (571 aa).

The segment at 440–472 (TRDDGINTADYQSQFPELEPEPEPEPEDEGEDV) is disordered. A compositionally biased stretch (acidic residues) spans 457-471 (LEPEPEPEPEDEGED).

It belongs to the DM7 family.

The sequence is that of DM7 family protein CG15332 from Drosophila melanogaster (Fruit fly).